The primary structure comprises 276 residues: Shikimate dehydrogenase (NADP(+)) (276 aa).

Shikimate contacts are provided by residues 20-22 and threonine 67; that span reads SRS. Lysine 71 serves as the catalytic Proton acceptor. Position 83 (aspartate 83) interacts with NADP(+). Positions 92 and 107 each coordinate shikimate. NADP(+)-binding positions include 131–135 and isoleucine 217; that span reads GAGGA. Tyrosine 219 contributes to the shikimate binding site. Position 240 (glycine 240) interacts with NADP(+).

The protein belongs to the shikimate dehydrogenase family. As to quaternary structure, homodimer.

It catalyses the reaction shikimate + NADP(+) = 3-dehydroshikimate + NADPH + H(+). Its pathway is metabolic intermediate biosynthesis; chorismate biosynthesis; chorismate from D-erythrose 4-phosphate and phosphoenolpyruvate: step 4/7. Functionally, involved in the biosynthesis of the chorismate, which leads to the biosynthesis of aromatic amino acids. Catalyzes the reversible NADPH linked reduction of 3-dehydroshikimate (DHSA) to yield shikimate (SA). The sequence is that of Shikimate dehydrogenase (NADP(+)) from Acidiphilium cryptum (strain JF-5).